We begin with the raw amino-acid sequence, 640 residues long: Threonine--tRNA ligase (640 aa).

The catalytic stretch occupies residues 224–525 (DHRKLGKELD…LTEHYAGAFP (302 aa)). Zn(2+) contacts are provided by cysteine 323, histidine 374, and histidine 502.

Belongs to the class-II aminoacyl-tRNA synthetase family. In terms of assembly, homodimer. Zn(2+) serves as cofactor.

Its subcellular location is the cytoplasm. It carries out the reaction tRNA(Thr) + L-threonine + ATP = L-threonyl-tRNA(Thr) + AMP + diphosphate + H(+). In terms of biological role, catalyzes the attachment of threonine to tRNA(Thr) in a two-step reaction: L-threonine is first activated by ATP to form Thr-AMP and then transferred to the acceptor end of tRNA(Thr). Also edits incorrectly charged L-seryl-tRNA(Thr). The polypeptide is Threonine--tRNA ligase (Tropheryma whipplei (strain Twist) (Whipple's bacillus)).